The sequence spans 197 residues: MSTNFIYPNAHLIAGVDEVGRGPLVGAVVTAAVILDPNNPIEGLADSKKLSEKKRLLLAEEIKAKALCWSLGRAEPEEIDRLNILHATMLAMQRAVAGLNIQPDFVLVDGNRIPTLPMPAQAVIKGDSLVAEISAASILAKVARDQEMAELDVQYPEYGFAKHKGYPTKLHFEKLEQFGATPFHRKSFAPVKKILGL.

The RNase H type-2 domain maps to 11–197 (HLIAGVDEVG…FAPVKKILGL (187 aa)). Residues Asp17, Glu18, and Asp109 each contribute to the a divalent metal cation site.

It belongs to the RNase HII family. It depends on Mn(2+) as a cofactor. The cofactor is Mg(2+).

It localises to the cytoplasm. It carries out the reaction Endonucleolytic cleavage to 5'-phosphomonoester.. In terms of biological role, endonuclease that specifically degrades the RNA of RNA-DNA hybrids. The chain is Ribonuclease HII from Actinobacillus pleuropneumoniae serotype 7 (strain AP76).